A 263-amino-acid polypeptide reads, in one-letter code: uncharacterized protein (263 aa).

The stretch at 72–168 forms a coiled coil; sequence LDKKETKELS…RTIVEIRNTK (97 aa). The segment at 76 to 158 is disordered; sequence ETKELSKKEK…EKKEKKEKED (83 aa). The span at 83 to 95 shows a compositional bias: basic residues; that stretch reads KEKKQLKKEKKAL. A compositionally biased stretch (basic and acidic residues) spans 96-107; that stretch reads KKENKGGKDKKD. The segment covering 108 to 121 has biased composition (basic residues); it reads KKDKKDKKDKKDKK. Basic and acidic residues-rich tracts occupy residues 122-131 and 139-158; these read DKKDKGDKKD and KHDD…EKED.

This is an uncharacterized protein from Dictyostelium discoideum (Social amoeba).